The following is a 198-amino-acid chain: Large ribosomal subunit protein bL25 (198 aa).

It belongs to the bacterial ribosomal protein bL25 family. CTC subfamily. Part of the 50S ribosomal subunit; part of the 5S rRNA/L5/L18/L25 subcomplex. Contacts the 5S rRNA. Binds to the 5S rRNA independently of L5 and L18.

Functionally, this is one of the proteins that binds to the 5S RNA in the ribosome where it forms part of the central protuberance. This is Large ribosomal subunit protein bL25 from Bordetella avium (strain 197N).